Reading from the N-terminus, the 800-residue chain is Putative antiporter subunit mnhA2 (800 aa).

Transmembrane regions (helical) follow at residues Met-1 to Ser-21, Ile-33 to Ile-53, Gly-78 to Ala-98, Leu-118 to Phe-138, Phe-167 to Met-187, Ala-207 to Phe-227, Thr-241 to Leu-261, Tyr-273 to Leu-293, Gly-300 to Gly-320, Ile-331 to Ile-351, Leu-387 to Ser-407, Phe-424 to Phe-444, Pro-472 to Val-492, Gly-527 to Ile-547, Ile-595 to Leu-615, Gly-627 to Ile-647, Leu-651 to Met-671, Leu-676 to Ser-696, Ile-712 to Ala-732, and Leu-768 to Leu-788.

Belongs to the CPA3 antiporters (TC 2.A.63) subunit A family. As to quaternary structure, may form a heterooligomeric complex that consists of seven subunits: mnhA2, mnhB2, mnhC2, mnhD2, mnhE2, mnhF2 and mnhG2.

The protein localises to the cell membrane. This chain is Putative antiporter subunit mnhA2 (mnhA2), found in Staphylococcus aureus (strain MRSA252).